We begin with the raw amino-acid sequence, 37 residues long: uncharacterized protein (37 aa).

It belongs to the poxviridae A56.5 protein family.

This is an uncharacterized protein from Vaccinia virus (strain Western Reserve) (VACV).